We begin with the raw amino-acid sequence, 360 residues long: Phosphoserine aminotransferase (360 aa).

Position 41 (arginine 41) interacts with L-glutamate. Residues tryptophan 101, threonine 152, aspartate 172, and glutamine 195 each coordinate pyridoxal 5'-phosphate. Lysine 196 is modified (N6-(pyridoxal phosphate)lysine). 237 to 238 (NT) lines the pyridoxal 5'-phosphate pocket.

The protein belongs to the class-V pyridoxal-phosphate-dependent aminotransferase family. SerC subfamily. Homodimer. Pyridoxal 5'-phosphate serves as cofactor.

Its subcellular location is the cytoplasm. It catalyses the reaction O-phospho-L-serine + 2-oxoglutarate = 3-phosphooxypyruvate + L-glutamate. The catalysed reaction is 4-(phosphooxy)-L-threonine + 2-oxoglutarate = (R)-3-hydroxy-2-oxo-4-phosphooxybutanoate + L-glutamate. Its pathway is amino-acid biosynthesis; L-serine biosynthesis; L-serine from 3-phospho-D-glycerate: step 2/3. It functions in the pathway cofactor biosynthesis; pyridoxine 5'-phosphate biosynthesis; pyridoxine 5'-phosphate from D-erythrose 4-phosphate: step 3/5. Its function is as follows. Catalyzes the reversible conversion of 3-phosphohydroxypyruvate to phosphoserine and of 3-hydroxy-2-oxo-4-phosphonooxybutanoate to phosphohydroxythreonine. This is Phosphoserine aminotransferase from Paraburkholderia phytofirmans (strain DSM 17436 / LMG 22146 / PsJN) (Burkholderia phytofirmans).